Here is a 175-residue protein sequence, read N- to C-terminus: Gamma-crystallin B (175 aa).

2 consecutive Beta/gamma crystallin 'Greek key' domains span residues 2–40 (GKITFYEDRAFQGRSYECTTDCPNLQPYFSRCNSIRVES) and 41–83 (GCWM…HLIP). The segment at 84-88 (PHSGT) is connecting peptide. Beta/gamma crystallin 'Greek key' domains follow at residues 89–129 (YRMK…NVLE) and 130–172 (GSWI…RRVM).

It belongs to the beta/gamma-crystallin family. As to quaternary structure, monomer.

Functionally, crystallins are the dominant structural components of the vertebrate eye lens. This Macaca mulatta (Rhesus macaque) protein is Gamma-crystallin B (CRYGB).